A 338-amino-acid chain; its full sequence is uncharacterized protein (338 aa).

Residues 20-40 (IFFTLTFSLSNLFLAICYLFL) form a helical membrane-spanning segment.

It is found in the membrane. This is an uncharacterized protein from Schizosaccharomyces pombe (strain 972 / ATCC 24843) (Fission yeast).